A 215-amino-acid polypeptide reads, in one-letter code: Cytochrome b6 (215 aa).

Residues 32 to 52 (IFYCLGGITLTCFLVQVATGF) traverse the membrane as a helical segment. Cys-35 provides a ligand contact to heme c. Heme b contacts are provided by His-86 and His-100. A run of 3 helical transmembrane segments spans residues 90 to 110 (ASMM…TGGF), 116 to 136 (LTWV…VTGY), and 186 to 206 (LHTF…FLMI). 2 residues coordinate heme b: His-187 and His-202.

This sequence belongs to the cytochrome b family. PetB subfamily. In terms of assembly, the 4 large subunits of the cytochrome b6-f complex are cytochrome b6, subunit IV (17 kDa polypeptide, PetD), cytochrome f and the Rieske protein, while the 4 small subunits are PetG, PetL, PetM and PetN. The complex functions as a dimer. Requires heme b as cofactor. The cofactor is heme c.

Its subcellular location is the plastid. It localises to the chloroplast thylakoid membrane. Component of the cytochrome b6-f complex, which mediates electron transfer between photosystem II (PSII) and photosystem I (PSI), cyclic electron flow around PSI, and state transitions. The sequence is that of Cytochrome b6 from Pinus thunbergii (Japanese black pine).